Here is a 239-residue protein sequence, read N- to C-terminus: DNA repair protein RecO (239 aa).

It belongs to the RecO family.

In terms of biological role, involved in DNA repair and RecF pathway recombination. The polypeptide is DNA repair protein RecO (Stenotrophomonas maltophilia (strain K279a)).